Reading from the N-terminus, the 173-residue chain is Siroheme decarboxylase alpha subunit (173 aa).

The substrate site is built by His115 and Arg119.

Belongs to the Ahb/Nir family. In terms of assembly, forms a heterodimer composed of AhbA and AhbB.

It catalyses the reaction siroheme + 2 H(+) = 12,18-didecarboxysiroheme + 2 CO2. It functions in the pathway porphyrin-containing compound metabolism; protoheme biosynthesis. Functionally, involved in siroheme-dependent heme b biosynthesis. Catalyzes the decarboxylation of siroheme into didecarboxysiroheme. Siroheme is decarboxylated to monodecarboxysiroheme, which is in turn decarboxylated to didecarboxysiroheme. The sequence is that of Siroheme decarboxylase alpha subunit from Desulfovibrio desulfuricans (strain ATCC 27774 / DSM 6949 / MB).